A 287-amino-acid polypeptide reads, in one-letter code: tRNA-cytidine(32) 2-sulfurtransferase (287 aa).

The PP-loop motif signature appears at serine 39–serine 44. [4Fe-4S] cluster-binding residues include cysteine 114, cysteine 117, and cysteine 205.

It belongs to the TtcA family. In terms of assembly, homodimer. The cofactor is Mg(2+). [4Fe-4S] cluster is required as a cofactor.

It localises to the cytoplasm. It carries out the reaction cytidine(32) in tRNA + S-sulfanyl-L-cysteinyl-[cysteine desulfurase] + AH2 + ATP = 2-thiocytidine(32) in tRNA + L-cysteinyl-[cysteine desulfurase] + A + AMP + diphosphate + H(+). Its pathway is tRNA modification. Its function is as follows. Catalyzes the ATP-dependent 2-thiolation of cytidine in position 32 of tRNA, to form 2-thiocytidine (s(2)C32). The sulfur atoms are provided by the cysteine/cysteine desulfurase (IscS) system. The polypeptide is tRNA-cytidine(32) 2-sulfurtransferase (Dechloromonas aromatica (strain RCB)).